The chain runs to 528 residues: Protein spinster homolog 1 (528 aa).

Positions 1-38 are disordered; the sequence is MAGSDTAPFLSQADDPDDGPAPGHPGLPGPMGNPKSGE. Residue Ala-2 is modified to N-acetylalanine. Transmembrane regions (helical) follow at residues 60–80, 98–118, 126–146, 160–180, 187–207, 218–238, 278–298, 323–343, 357–377, 381–401, 421–441, and 465–485; these read LIVV…FTVA, GLIQ…FGYL, YLMC…SFIP, VGVG…DLFV, MLSI…IAGS, WALR…FLVV, LGFT…PAFL, LIFG…GVEI, LVCA…LACA, IVAT…NWAI, FQIV…IGLI, and MLCA…AMFI. A Phosphoserine modification is found at Ser-518.

This sequence belongs to the major facilitator superfamily. Spinster (TC 2.A.1.49) family. In terms of assembly, interacts with BCL2 and BCL2L1.

The protein resides in the lysosome membrane. It carries out the reaction a 1-acyl-sn-glycero-3-phosphocholine(out) + H(+)(out) = a 1-acyl-sn-glycero-3-phosphocholine(in) + H(+)(in). It catalyses the reaction 1-hexadecanoyl-sn-glycero-3-phosphocholine(out) + H(+)(out) = 1-hexadecanoyl-sn-glycero-3-phosphocholine(in) + H(+)(in). The enzyme catalyses 1-(9Z-octadecenoyl)-sn-glycero-3-phosphocholine(out) + H(+)(out) = 1-(9Z-octadecenoyl)-sn-glycero-3-phosphocholine(in) + H(+)(in). The catalysed reaction is 1-(5Z,8Z,11Z,14Z-eicosatetraenoyl)-sn-glycero-3-phosphocholine(out) + H(+)(out) = 1-(5Z,8Z,11Z,14Z-eicosatetraenoyl)-sn-glycero-3-phosphocholine(in) + H(+)(in). It carries out the reaction 1-(4Z,7Z,10Z,13Z,16Z,19Z-docosahexaenoyl)-sn-glycero-3-phosphocholine(out) + H(+)(out) = 1-(4Z,7Z,10Z,13Z,16Z,19Z-docosahexaenoyl)-sn-glycero-3-phosphocholine(in) + H(+)(in). It catalyses the reaction a 1-acyl-sn-glycero-3-phosphoethanolamine(out) + H(+)(out) = a 1-acyl-sn-glycero-3-phosphoethanolamine(in) + H(+)(in). The enzyme catalyses 1-(9Z-octadecenoyl)-sn-glycero-3-phosphoethanolamine(out) + H(+)(out) = 1-(9Z-octadecenoyl)-sn-glycero-3-phosphoethanolamine(in) + H(+)(in). The catalysed reaction is 1-acyl-sn-glycero-3-phospho-(1'-sn-glycerol)(out) + H(+)(out) = 1-acyl-sn-glycero-3-phospho-(1'-sn-glycerol)(in) + H(+)(in). It carries out the reaction 1-(9Z-octadecenoyl)-sn-glycero-3-phospho-(1'-sn-glycerol)(out) + H(+)(out) = 1-(9Z-octadecenoyl)-sn-glycero-3-phospho-(1'-sn-glycerol)(in) + H(+)(in). It catalyses the reaction a 1-O-(1Z-alkenyl)-sn-glycero-3-phosphocholine(out) + H(+)(out) = a 1-O-(1Z-alkenyl)-sn-glycero-3-phosphocholine(in) + H(+)(in). The enzyme catalyses 1-(1Z-hexadecenyl)-sn-glycero-3-phosphocholine(out) + H(+)(out) = 1-(1Z-hexadecenyl)-sn-glycero-3-phosphocholine(in) + H(+)(in). The catalysed reaction is a 1-O-(1Z-alkenyl)-sn-glycero-3-phosphoethanolamine(out) + H(+)(out) = a 1-O-(1Z-alkenyl)-sn-glycero-3-phosphoethanolamine(in) + H(+)(in). It carries out the reaction 1-O-(1Z-hexadecenyl)-sn-glycero-3-phosphoethanolamine(out) + H(+)(out) = 1-O-(1Z-hexadecenyl)-sn-glycero-3-phosphoethanolamine(in) + H(+)(in). Its function is as follows. Plays a critical role in the phospholipid salvage pathway from lysosomes to the cytosol. Mediates the rate-limiting, proton-dependent, lysosomal efflux of lysophospholipids, which can then be reacylated by acyltransferases in the endoplasmic reticulum to form phospholipids. Selective for zwitterionic headgroups such as lysophosphatidylcholine (LPC) and lysophosphatidylethanolamine (LPE), can also transport lysophosphatidylglycerol (LPG), but not other anionic lysophospholipids, sphingosine, nor sphingomyelin. Transports lysophospholipids with saturated, monounsaturated, and polyunsaturated fatty acids, such as 1-hexadecanoyl-sn-glycero-3-phosphocholine, 1-(9Z-octadecenoyl)-sn-glycero-3-phosphocholine and 1-(4Z,7Z,10Z,13Z,16Z,19Z-docosahexaenoyl)-sn-glycero-3-phosphocholine, respectively. Can also transport lysoplasmalogen (LPC with a fatty alcohol) such as 1-(1Z-hexadecenyl)-sn-glycero-3-phosphocholine. Essential player in lysosomal homeostasis. Crucial for cell survival under conditions of nutrient limitation. May be involved in necrotic or autophagic cell death. The sequence is that of Protein spinster homolog 1 (Spns1) from Rattus norvegicus (Rat).